We begin with the raw amino-acid sequence, 204 residues long: tRNA (guanine-N(7)-)-methyltransferase (204 aa).

Residues E36, E61, and D111 each contribute to the S-adenosyl-L-methionine site. D111 is an active-site residue. Substrate-binding positions include K115, D147, and 177-180; that span reads TRFE.

Belongs to the class I-like SAM-binding methyltransferase superfamily. TrmB family.

It catalyses the reaction guanosine(46) in tRNA + S-adenosyl-L-methionine = N(7)-methylguanosine(46) in tRNA + S-adenosyl-L-homocysteine. Its pathway is tRNA modification; N(7)-methylguanine-tRNA biosynthesis. Functionally, catalyzes the formation of N(7)-methylguanine at position 46 (m7G46) in tRNA. The chain is tRNA (guanine-N(7)-)-methyltransferase from Chlorobium phaeobacteroides (strain DSM 266 / SMG 266 / 2430).